Here is a 345-residue protein sequence, read N- to C-terminus: Heat-inducible transcription repressor HrcA (345 aa).

Belongs to the HrcA family.

Its function is as follows. Negative regulator of class I heat shock genes (grpE-dnaK-dnaJ and groELS operons). Prevents heat-shock induction of these operons. The protein is Heat-inducible transcription repressor HrcA of Dehalococcoides mccartyi (strain ATCC BAA-2266 / KCTC 15142 / 195) (Dehalococcoides ethenogenes (strain 195)).